Consider the following 146-residue polypeptide: NADH-quinone oxidoreductase subunit A (146 aa).

3 consecutive transmembrane segments (helical) span residues 4 to 24, 63 to 83, and 91 to 111; these read IYHWGLIAFIVGILFLCVFML, LIAMFFVIFDVEGIYVYAWAI, and IGFSEIFIFIFILLVSLIYLI.

Belongs to the complex I subunit 3 family. NDH-1 is composed of 13 different subunits. Subunits NuoA, H, J, K, L, M, N constitute the membrane sector of the complex.

The protein resides in the cell inner membrane. It carries out the reaction a quinone + NADH + 5 H(+)(in) = a quinol + NAD(+) + 4 H(+)(out). Functionally, NDH-1 shuttles electrons from NADH, via FMN and iron-sulfur (Fe-S) centers, to quinones in the respiratory chain. The immediate electron acceptor for the enzyme in this species is believed to be ubiquinone. Couples the redox reaction to proton translocation (for every two electrons transferred, four hydrogen ions are translocated across the cytoplasmic membrane), and thus conserves the redox energy in a proton gradient. This chain is NADH-quinone oxidoreductase subunit A, found in Blochmanniella pennsylvanica (strain BPEN).